The sequence spans 265 residues: Glycine/sarcosine N-methyltransferase (265 aa).

S-adenosyl-L-methionine is bound by residues Y28, W36, R45, A69, D90, 116 to 117 (DW), and L134. Substrate is bound by residues N136, R169, and Y208.

This sequence belongs to the class I-like SAM-binding methyltransferase superfamily. Glycine N-methyltransferase family. In terms of assembly, monomer.

The enzyme catalyses glycine + 2 S-adenosyl-L-methionine = N,N-dimethylglycine + 2 S-adenosyl-L-homocysteine + 2 H(+). It catalyses the reaction glycine + S-adenosyl-L-methionine = sarcosine + S-adenosyl-L-homocysteine + H(+). It carries out the reaction sarcosine + S-adenosyl-L-methionine = N,N-dimethylglycine + S-adenosyl-L-homocysteine + H(+). The protein operates within amine and polyamine biosynthesis; betaine biosynthesis via glycine pathway; betaine from glycine: step 1/3. It participates in amine and polyamine biosynthesis; betaine biosynthesis via glycine pathway; betaine from glycine: step 2/3. With respect to regulation, inhibited by acetate, dimethylglycine and S-adenosyl-L-homocysteine. Catalyzes the methylation of glycine and sarcosine to sarcosine and dimethylglycine, respectively, with S-adenosylmethionine (AdoMet) acting as the methyl donor. The sequence is that of Glycine/sarcosine N-methyltransferase from Aphanothece halophytica.